Reading from the N-terminus, the 285-residue chain is MILKDSLEAKSCFKSSQTSHLAARVAMENPQKGNVINAQSSRQPSSENEFRENLFFKEMRTNGKNEHETSCRSVVLYRNSKSAKRYPLSTKCARISYMQGNKDTKTALTKKYKSNEDVSRMRKKGNKYPQCKSKNLYDSLKLEECIESWSLNQKQNENFYEHTHLNSRDDSNPSSCDRETFFLSDEDSEISLMEGLSSIENGYPDEKETLAALDNVKLSDENAAHLGYLVKYFQNYTDKIILKETLMDWEDKEPSLQELTESTKYLENLADTDHRTSNKPFLFLR.

It is found in the cytoplasm. The protein localises to the nucleus. Functionally, has a role in meiosis. The polypeptide is Meiotically up-regulated gene 125 protein (mug125) (Schizosaccharomyces pombe (strain 972 / ATCC 24843) (Fission yeast)).